A 240-amino-acid chain; its full sequence is Protein GrpE (240 aa).

Disordered stretches follow at residues 1-54 (MSGD…NEAR) and 206-240 (VSMG…DGNG). Low complexity predominate over residues 215–233 (GASSQPAEAPAADAPAEDS).

The protein belongs to the GrpE family. Homodimer.

The protein resides in the cytoplasm. Participates actively in the response to hyperosmotic and heat shock by preventing the aggregation of stress-denatured proteins, in association with DnaK and GrpE. It is the nucleotide exchange factor for DnaK and may function as a thermosensor. Unfolded proteins bind initially to DnaJ; upon interaction with the DnaJ-bound protein, DnaK hydrolyzes its bound ATP, resulting in the formation of a stable complex. GrpE releases ADP from DnaK; ATP binding to DnaK triggers the release of the substrate protein, thus completing the reaction cycle. Several rounds of ATP-dependent interactions between DnaJ, DnaK and GrpE are required for fully efficient folding. This Synechococcus sp. (strain WH7803) protein is Protein GrpE.